Reading from the N-terminus, the 62-residue chain is Large ribosomal subunit protein bL32 (62 aa).

It belongs to the bacterial ribosomal protein bL32 family.

The protein is Large ribosomal subunit protein bL32 of Levilactobacillus brevis (strain ATCC 367 / BCRC 12310 / CIP 105137 / JCM 1170 / LMG 11437 / NCIMB 947 / NCTC 947) (Lactobacillus brevis).